A 309-amino-acid chain; its full sequence is Homoserine O-succinyltransferase (309 aa).

Residue cysteine 142 is the Acyl-thioester intermediate of the active site. Substrate-binding residues include lysine 163 and serine 192. Histidine 235 functions as the Proton acceptor in the catalytic mechanism. Glutamate 237 is an active-site residue. Arginine 249 lines the substrate pocket.

This sequence belongs to the MetA family.

It is found in the cytoplasm. It carries out the reaction L-homoserine + succinyl-CoA = O-succinyl-L-homoserine + CoA. Its pathway is amino-acid biosynthesis; L-methionine biosynthesis via de novo pathway; O-succinyl-L-homoserine from L-homoserine: step 1/1. Its function is as follows. Transfers a succinyl group from succinyl-CoA to L-homoserine, forming succinyl-L-homoserine. This is Homoserine O-succinyltransferase from Edwardsiella ictaluri (strain 93-146).